Here is a 914-residue protein sequence, read N- to C-terminus: Inter-alpha-trypsin inhibitor heavy chain H1 (914 aa).

A signal peptide spans 1–30 (MDGAAVGLRVLLGLGLVSLLTLEAMPAAWG). Positions 31-36 (LATTGR) are excised as a propeptide. One can recognise a VIT domain in the interval 39-168 (AREKRQAVDT…KATFQLTYEE (130 aa)). A glycan (S-linked (Hex...) cysteine) is linked at Cys62. Ser131 bears the Phosphoserine mark. Asn288 and Asn291 each carry an N-linked (GlcNAc...) asparagine glycan. A VWFA domain is found at 293-453 (SKNLVFVIDI…FNFLEVMSME (161 aa)). Phosphothreonine is present on residues Thr405 and Thr410. Asn591 carries N-linked (GlcNAc...) asparagine glycosylation. The O-linked (GalNAc...) threonine glycan is linked to Thr656. Asp675 is modified (aspartate 1-(chondroitin 4-sulfate)-ester). The propeptide occupies 676–914 (PHFIIYVPQK…HTDYIVPDIF (239 aa)).

It belongs to the ITIH family. In terms of assembly, I-alpha-I plasma protease inhibitors are assembled from one or two heavy chains (HC) and one light chain, bikunin. Inter-alpha-inhibitor (I-alpha-I) is composed of ITIH1/HC1, ITIH2/HC2 and bikunin. Interacts with TNFAIP6 (via Link and CUB domains). Post-translationally, heavy chains are linked to bikunin via chondroitin 4-sulfate esterified to the alpha-carboxyl of the C-terminal aspartate after propeptide cleavage. In terms of processing, the S-linked glycan is composed of two 6-carbon sugars, possibly Glc or Gal.

Its subcellular location is the secreted. In terms of biological role, may act as a carrier of hyaluronan in serum or as a binding protein between hyaluronan and other matrix protein, including those on cell surfaces in tissues to regulate the localization, synthesis and degradation of hyaluronan which are essential to cells undergoing biological processes. The chain is Inter-alpha-trypsin inhibitor heavy chain H1 (ITIH1) from Mesocricetus auratus (Golden hamster).